A 110-amino-acid chain; its full sequence is Large ribosomal subunit protein uL22 (110 aa).

Belongs to the universal ribosomal protein uL22 family. Part of the 50S ribosomal subunit.

This protein binds specifically to 23S rRNA; its binding is stimulated by other ribosomal proteins, e.g. L4, L17, and L20. It is important during the early stages of 50S assembly. It makes multiple contacts with different domains of the 23S rRNA in the assembled 50S subunit and ribosome. Functionally, the globular domain of the protein is located near the polypeptide exit tunnel on the outside of the subunit, while an extended beta-hairpin is found that lines the wall of the exit tunnel in the center of the 70S ribosome. This is Large ribosomal subunit protein uL22 from Idiomarina loihiensis (strain ATCC BAA-735 / DSM 15497 / L2-TR).